Consider the following 599-residue polypeptide: Elongation factor 4 (599 aa).

The tr-type G domain occupies 5-187; that stretch reads NRIRNFSIVA…AIVTRLPAPK (183 aa). GTP-binding positions include 17–22 and 134–137; these read DHGKST and NKVD.

The protein belongs to the TRAFAC class translation factor GTPase superfamily. Classic translation factor GTPase family. LepA subfamily.

It is found in the cell inner membrane. It catalyses the reaction GTP + H2O = GDP + phosphate + H(+). Required for accurate and efficient protein synthesis under certain stress conditions. May act as a fidelity factor of the translation reaction, by catalyzing a one-codon backward translocation of tRNAs on improperly translocated ribosomes. Back-translocation proceeds from a post-translocation (POST) complex to a pre-translocation (PRE) complex, thus giving elongation factor G a second chance to translocate the tRNAs correctly. Binds to ribosomes in a GTP-dependent manner. This chain is Elongation factor 4, found in Jannaschia sp. (strain CCS1).